Reading from the N-terminus, the 454-residue chain is UPF0210 protein BAD_1323 (454 aa).

Belongs to the UPF0210 family. Homodimer.

The polypeptide is UPF0210 protein BAD_1323 (Bifidobacterium adolescentis (strain ATCC 15703 / DSM 20083 / NCTC 11814 / E194a)).